Here is a 93-residue protein sequence, read N- to C-terminus: Small ribosomal subunit protein uS19 (93 aa).

The disordered stretch occupies residues 73 to 93; it reads EFSPTRTYRGHNKKDKKIQKK. Residues 80 to 93 are compositionally biased toward basic residues; it reads YRGHNKKDKKIQKK.

The protein belongs to the universal ribosomal protein uS19 family.

Its function is as follows. Protein S19 forms a complex with S13 that binds strongly to the 16S ribosomal RNA. The chain is Small ribosomal subunit protein uS19 (rpsS) from Aster yellows phytoplasma.